We begin with the raw amino-acid sequence, 335 residues long: Beta-ketoacyl-[acyl-carrier-protein] synthase III (335 aa).

Catalysis depends on residues C116 and H256. The ACP-binding stretch occupies residues Q257 to R261. N286 is a catalytic residue.

It belongs to the thiolase-like superfamily. FabH family. In terms of assembly, homodimer.

The protein resides in the cytoplasm. The enzyme catalyses malonyl-[ACP] + acetyl-CoA + H(+) = 3-oxobutanoyl-[ACP] + CO2 + CoA. Its pathway is lipid metabolism; fatty acid biosynthesis. Functionally, catalyzes the condensation reaction of fatty acid synthesis by the addition to an acyl acceptor of two carbons from malonyl-ACP. Catalyzes the first condensation reaction which initiates fatty acid synthesis and may therefore play a role in governing the total rate of fatty acid production. Possesses both acetoacetyl-ACP synthase and acetyl transacylase activities. Its substrate specificity determines the biosynthesis of branched-chain and/or straight-chain of fatty acids. The sequence is that of Beta-ketoacyl-[acyl-carrier-protein] synthase III from Porphyromonas gingivalis (strain ATCC 33277 / DSM 20709 / CIP 103683 / JCM 12257 / NCTC 11834 / 2561).